Here is a 183-residue protein sequence, read N- to C-terminus: Large ribosomal subunit protein bL17 (183 aa).

Basic and acidic residues predominate over residues G130 to E150. A disordered region spans residues G130–S183. The span at T151–S162 shows a compositional bias: acidic residues. The segment covering E168 to S183 has biased composition (basic and acidic residues).

It belongs to the bacterial ribosomal protein bL17 family. As to quaternary structure, part of the 50S ribosomal subunit. Contacts protein L32.

The polypeptide is Large ribosomal subunit protein bL17 (Saccharopolyspora erythraea (strain ATCC 11635 / DSM 40517 / JCM 4748 / NBRC 13426 / NCIMB 8594 / NRRL 2338)).